The primary structure comprises 348 residues: D-alanine--D-alanine ligase (348 aa).

The region spanning 136–341 (KYLLQTVGIP…YSDLIEELIQ (206 aa)) is the ATP-grasp domain. An ATP-binding site is contributed by 169-224 (EGSLIYPVFVKPANMGSSVGISKVENREELQEALEEAFRYDARAIVEQGIEAREIE). Asp-295, Glu-308, and Asn-310 together coordinate Mg(2+).

The protein belongs to the D-alanine--D-alanine ligase family. Requires Mg(2+) as cofactor. Mn(2+) serves as cofactor.

Its subcellular location is the cytoplasm. The catalysed reaction is 2 D-alanine + ATP = D-alanyl-D-alanine + ADP + phosphate + H(+). It functions in the pathway cell wall biogenesis; peptidoglycan biosynthesis. Its function is as follows. Cell wall formation. This is D-alanine--D-alanine ligase (ddl) from Enterococcus faecalis (strain ATCC 700802 / V583).